The sequence spans 954 residues: Translation initiation factor IF-2 (954 aa).

The segment covering 56 to 75 (KAAAPAAPKAPAPAAESRPA) has biased composition (low complexity). The tract at residues 56 to 355 (KAAAPAAPKA…GVSVPRGDGN (300 aa)) is disordered. The span at 76-87 (APAPGPAAPKAP) shows a compositional bias: pro residues. 2 stretches are compositionally biased toward low complexity: residues 88–125 (APKV…KPGA) and 138–151 (PRQG…SAPR). Over residues 241–254 (PGAPRPGGPRPTPG) the composition is skewed to pro residues. Residues 269 to 322 (GRPGGGGRGPGRPGAPGTGGPGGGGGAPAGGGFGKGGRGRGGTQGAFGKGGAGR) are compositionally biased toward gly residues. The span at 323–332 (GKQRKSKRAK) shows a compositional bias: basic residues. Positions 447-618 (PRAPVVTVMG…AVLLTADAAL (172 aa)) constitute a tr-type G domain. A G1 region spans residues 456–463 (GHVDHGKT). 456-463 (GHVDHGKT) provides a ligand contact to GTP. The interval 481-485 (GITQH) is G2. The G3 stretch occupies residues 506-509 (DTPG). GTP contacts are provided by residues 506–510 (DTPGH) and 560–563 (NKID). The interval 560–563 (NKID) is G4. Positions 596 to 598 (SAR) are G5.

Belongs to the TRAFAC class translation factor GTPase superfamily. Classic translation factor GTPase family. IF-2 subfamily.

It localises to the cytoplasm. Its function is as follows. One of the essential components for the initiation of protein synthesis. Protects formylmethionyl-tRNA from spontaneous hydrolysis and promotes its binding to the 30S ribosomal subunits. Also involved in the hydrolysis of GTP during the formation of the 70S ribosomal complex. In Pseudarthrobacter chlorophenolicus (strain ATCC 700700 / DSM 12829 / CIP 107037 / JCM 12360 / KCTC 9906 / NCIMB 13794 / A6) (Arthrobacter chlorophenolicus), this protein is Translation initiation factor IF-2.